We begin with the raw amino-acid sequence, 245 residues long: 1-(5-phosphoribosyl)-5-[(5-phosphoribosylamino)methylideneamino] imidazole-4-carboxamide isomerase (245 aa).

The active-site Proton acceptor is Asp7. Asp129 (proton donor) is an active-site residue.

This sequence belongs to the HisA/HisF family.

Its subcellular location is the cytoplasm. It carries out the reaction 1-(5-phospho-beta-D-ribosyl)-5-[(5-phospho-beta-D-ribosylamino)methylideneamino]imidazole-4-carboxamide = 5-[(5-phospho-1-deoxy-D-ribulos-1-ylimino)methylamino]-1-(5-phospho-beta-D-ribosyl)imidazole-4-carboxamide. Its pathway is amino-acid biosynthesis; L-histidine biosynthesis; L-histidine from 5-phospho-alpha-D-ribose 1-diphosphate: step 4/9. The protein is 1-(5-phosphoribosyl)-5-[(5-phosphoribosylamino)methylideneamino] imidazole-4-carboxamide isomerase of Escherichia coli O6:K15:H31 (strain 536 / UPEC).